The sequence spans 644 residues: Exoribonuclease 2 (644 aa).

The RNB domain maps to 189–516; it reads RRDLTALDFV…NHRLLKAIIK (328 aa). Positions 561-643 constitute an S1 motif domain; it reads DTRFAAEILD…ETRSIIARPA (83 aa).

It belongs to the RNR ribonuclease family. RNase II subfamily.

The protein resides in the cytoplasm. The enzyme catalyses Exonucleolytic cleavage in the 3'- to 5'-direction to yield nucleoside 5'-phosphates.. Involved in mRNA degradation. Hydrolyzes single-stranded polyribonucleotides processively in the 3' to 5' direction. The protein is Exoribonuclease 2 of Klebsiella pneumoniae (strain 342).